A 247-amino-acid polypeptide reads, in one-letter code: tRNA (guanine-N(1)-)-methyltransferase (247 aa).

S-adenosyl-L-methionine contacts are provided by residues glycine 115 and 134–139 (IGDFVL).

Belongs to the RNA methyltransferase TrmD family. As to quaternary structure, homodimer.

Its subcellular location is the cytoplasm. The catalysed reaction is guanosine(37) in tRNA + S-adenosyl-L-methionine = N(1)-methylguanosine(37) in tRNA + S-adenosyl-L-homocysteine + H(+). In terms of biological role, specifically methylates guanosine-37 in various tRNAs. The polypeptide is tRNA (guanine-N(1)-)-methyltransferase (Anaeromyxobacter sp. (strain K)).